A 281-amino-acid polypeptide reads, in one-letter code: Energy-coupling factor transporter ATP-binding protein EcfA1 (281 aa).

An ABC transporter domain is found at 6-242; that stretch reads IDVKHLDYRY…GEALIKMGLD (237 aa). 42–49 is a binding site for ATP; that stretch reads GHNGSGKS.

This sequence belongs to the ABC transporter superfamily. Energy-coupling factor EcfA family. In terms of assembly, forms a stable energy-coupling factor (ECF) transporter complex composed of 2 membrane-embedded substrate-binding proteins (S component), 2 ATP-binding proteins (A component) and 2 transmembrane proteins (T component).

It is found in the cell membrane. Its function is as follows. ATP-binding (A) component of a common energy-coupling factor (ECF) ABC-transporter complex. Unlike classic ABC transporters this ECF transporter provides the energy necessary to transport a number of different substrates. This is Energy-coupling factor transporter ATP-binding protein EcfA1 from Lactiplantibacillus plantarum (strain ATCC BAA-793 / NCIMB 8826 / WCFS1) (Lactobacillus plantarum).